A 428-amino-acid polypeptide reads, in one-letter code: Histidine--tRNA ligase (428 aa).

Belongs to the class-II aminoacyl-tRNA synthetase family. Homodimer.

The protein localises to the cytoplasm. The catalysed reaction is tRNA(His) + L-histidine + ATP = L-histidyl-tRNA(His) + AMP + diphosphate + H(+). The sequence is that of Histidine--tRNA ligase from Lactobacillus gasseri (strain ATCC 33323 / DSM 20243 / BCRC 14619 / CIP 102991 / JCM 1131 / KCTC 3163 / NCIMB 11718 / NCTC 13722 / AM63).